The sequence spans 252 residues: MRTPIIAGNWKMNKTASEALAFVNAVKDQLPDPSKVESVVAAPALFLQEMVEAAKGSDLKIAAENAYFEDAGAFTGETSPAALADLGVDYVVIGHSERRGYFHETDEDINKKAHAIFKNGMKPIICCGESLEQREAGEAESWVSGQIKAALKDLSADQVSSLVIAYEPIWAIGTGKTATSDQAEEICAVVRKTVADLYSQEVADKVRIQYGGSVKPANVNELMGKDDIDGGLVGGASLQPDSFLELVNYQNN.

9-11 (NWK) contributes to the substrate binding site. Residue His95 is the Electrophile of the active site. The Proton acceptor role is filled by Glu167. Substrate is bound by residues Gly173, Ser213, and 234 to 235 (GG).

The protein belongs to the triosephosphate isomerase family. As to quaternary structure, homodimer.

It is found in the cytoplasm. It catalyses the reaction D-glyceraldehyde 3-phosphate = dihydroxyacetone phosphate. It participates in carbohydrate biosynthesis; gluconeogenesis. Its pathway is carbohydrate degradation; glycolysis; D-glyceraldehyde 3-phosphate from glycerone phosphate: step 1/1. Its function is as follows. Involved in the gluconeogenesis. Catalyzes stereospecifically the conversion of dihydroxyacetone phosphate (DHAP) to D-glyceraldehyde-3-phosphate (G3P). This is Triosephosphate isomerase from Lactiplantibacillus plantarum (strain ATCC BAA-793 / NCIMB 8826 / WCFS1) (Lactobacillus plantarum).